A 288-amino-acid chain; its full sequence is UDP-3-O-acyl-N-acetylglucosamine deacetylase (288 aa).

Zn(2+)-binding residues include His-79, His-236, and Asp-240. Residue His-263 is the Proton donor of the active site.

Belongs to the LpxC family. Requires Zn(2+) as cofactor.

The enzyme catalyses a UDP-3-O-[(3R)-3-hydroxyacyl]-N-acetyl-alpha-D-glucosamine + H2O = a UDP-3-O-[(3R)-3-hydroxyacyl]-alpha-D-glucosamine + acetate. It functions in the pathway glycolipid biosynthesis; lipid IV(A) biosynthesis; lipid IV(A) from (3R)-3-hydroxytetradecanoyl-[acyl-carrier-protein] and UDP-N-acetyl-alpha-D-glucosamine: step 2/6. In terms of biological role, catalyzes the hydrolysis of UDP-3-O-myristoyl-N-acetylglucosamine to form UDP-3-O-myristoylglucosamine and acetate, the committed step in lipid A biosynthesis. The sequence is that of UDP-3-O-acyl-N-acetylglucosamine deacetylase from Rickettsia bellii (strain OSU 85-389).